The chain runs to 219 residues: MATKITGVFILILTITFSSSSAVTATQQAPSSSPPVLTCTEELVMFSPCLPYVSSPPNNMSETPDPICCSVFTSSVHSSTGNCLCYLLRQPMILGFPLDRSRLISLSQICTDQNSEESFESLCSVSESPELPPLQSIQFTNPFVSGNNVSASPQSVDLAPEVSPSSDLFSPETATLAPPPPPPPLPVLQYFSSDSLKIRNFWFPSTIIMTFATSILARI.

The N-terminal stretch at 1–22 is a signal peptide; it reads MATKITGVFILILTITFSSSSA. 4 disulfides stabilise this stretch: C39–C85, C49–C68, C69–C110, and C83–C123. N-linked (GlcNAc...) asparagine glycosylation occurs at N59. N148 carries N-linked (GlcNAc...) asparagine glycosylation. The interval 152–181 is disordered; it reads SPQSVDLAPEVSPSSDLFSPETATLAPPPP. S192 carries GPI-anchor amidated serine lipidation. The propeptide at 193–219 is removed in mature form; the sequence is SDSLKIRNFWFPSTIIMTFATSILARI.

It belongs to the plant LTP family.

The protein resides in the cell membrane. Its function is as follows. Probable lipid transfer protein. The protein is Non-specific lipid transfer protein GPI-anchored 25 of Arabidopsis thaliana (Mouse-ear cress).